The sequence spans 338 residues: Methionine import ATP-binding protein MetN 1 (338 aa).

Residues 2–241 form the ABC transporter domain; sequence IQLENIEKHY…PNEKLTKDFI (240 aa). An ATP-binding site is contributed by 38 to 45; sequence GYSGAGKS.

Belongs to the ABC transporter superfamily. Methionine importer (TC 3.A.1.24) family. In terms of assembly, the complex is composed of two ATP-binding proteins (MetN), two transmembrane proteins (MetI) and a solute-binding protein (MetQ).

The protein resides in the cell membrane. It carries out the reaction L-methionine(out) + ATP + H2O = L-methionine(in) + ADP + phosphate + H(+). It catalyses the reaction D-methionine(out) + ATP + H2O = D-methionine(in) + ADP + phosphate + H(+). Its function is as follows. Part of the ABC transporter complex MetNIQ involved in methionine import. Responsible for energy coupling to the transport system. This is Methionine import ATP-binding protein MetN 1 from Oceanobacillus iheyensis (strain DSM 14371 / CIP 107618 / JCM 11309 / KCTC 3954 / HTE831).